Consider the following 274-residue polypeptide: MQFSKMHGLGNDFMVVDAVTQNVYFSPELIRRLADRHLGVGFDQLLVVEPPYDPELDFHYRIFNADGSEVAQCGNGARCFARFVRLKGLTNKRDIRVSTQTGRMVLSVTDDDLVCVNMGEPNFDPQTVPFRATKEEKTYIMRAAEHTVLCGVVSMGNPHCVLQVDDVKTAKVELLGPVLEGHERFPERANIGFMQIVSREHIKLRVYERGAGETQACGSGACAAVAVGIQQELLSEEVHVELPGGSLHIRWKGPGSPLFMTGPATHVYDGFIHL.

Residues N11, Q44, and N64 each coordinate substrate. The Proton donor role is filled by C73. Substrate-binding positions include 74 to 75 (GN), N157, N190, and 208 to 209 (ER). Catalysis depends on C217, which acts as the Proton acceptor. 218 to 219 (GS) provides a ligand contact to substrate.

It belongs to the diaminopimelate epimerase family. As to quaternary structure, homodimer.

It localises to the cytoplasm. The enzyme catalyses (2S,6S)-2,6-diaminopimelate = meso-2,6-diaminopimelate. It functions in the pathway amino-acid biosynthesis; L-lysine biosynthesis via DAP pathway; DL-2,6-diaminopimelate from LL-2,6-diaminopimelate: step 1/1. Catalyzes the stereoinversion of LL-2,6-diaminopimelate (L,L-DAP) to meso-diaminopimelate (meso-DAP), a precursor of L-lysine and an essential component of the bacterial peptidoglycan. This is Diaminopimelate epimerase from Serratia proteamaculans (strain 568).